A 352-amino-acid polypeptide reads, in one-letter code: NAD(P)H pyrophosphatase NUDT13, mitochondrial (352 aa).

The transit peptide at 1-20 (MSLYCGIACRRKFFWCYRLL) directs the protein to the mitochondrion. A Nudix hydrolase domain is found at 196–323 (PQMAPVAITL…PYTQQQNGTF (128 aa)). The Nudix box signature appears at 216–240 (RQSSFPKGMYSALAGFCDIGESVEE).

This sequence belongs to the Nudix hydrolase family. Mg(2+) serves as cofactor. The cofactor is Mn(2+). As to expression, highly expressed in metastasis-suppressed chromosome 6 melanoma hybrids.

It is found in the mitochondrion. The enzyme catalyses NADH + H2O = reduced beta-nicotinamide D-ribonucleotide + AMP + 2 H(+). It catalyses the reaction NAD(+) + H2O = beta-nicotinamide D-ribonucleotide + AMP + 2 H(+). The catalysed reaction is NADPH + H2O = reduced beta-nicotinamide D-ribonucleotide + adenosine 2',5'-bisphosphate + 2 H(+). Its function is as follows. NAD(P)H pyrophosphatase that hydrolyzes NADH into NMNH and AMP, and NADPH into NMNH and 2',5'-ADP. Has a marked preference for the reduced pyridine nucleotides. Does not show activity toward NAD-capped RNAs; the NAD-cap is an atypical cap present at the 5'-end of some RNAs. The protein is NAD(P)H pyrophosphatase NUDT13, mitochondrial of Homo sapiens (Human).